A 470-amino-acid chain; its full sequence is Ribulose bisphosphate carboxylase large chain (470 aa).

2 residues coordinate substrate: N118 and T168. Residue K170 is the Proton acceptor of the active site. A substrate-binding site is contributed by K172. Mg(2+) contacts are provided by K196, D198, and E199. Residue K196 is modified to N6-carboxylysine. The Proton acceptor role is filled by H289. 3 residues coordinate substrate: R290, H322, and S374.

The protein belongs to the RuBisCO large chain family. Type I subfamily. In terms of assembly, heterohexadecamer of 8 large chains and 8 small chains; disulfide-linked. The disulfide link is formed within the large subunit homodimers. RuBisCO interacts with the C-terminus of CcmM, and can be found in complexes that also include carbonic anhydrase (ccaA). RuBisCO associates with both the internal and shell portion of carboxysomes. The cofactor is Mg(2+). In terms of processing, the disulfide bond which can form in the large chain dimeric partners within the hexadecamer appears to be associated with oxidative stress and protein turnover.

It is found in the carboxysome. The enzyme catalyses 2 (2R)-3-phosphoglycerate + 2 H(+) = D-ribulose 1,5-bisphosphate + CO2 + H2O. The catalysed reaction is D-ribulose 1,5-bisphosphate + O2 = 2-phosphoglycolate + (2R)-3-phosphoglycerate + 2 H(+). Functionally, ruBisCO catalyzes two reactions: the carboxylation of D-ribulose 1,5-bisphosphate, the primary event in carbon dioxide fixation, as well as the oxidative fragmentation of the pentose substrate in the photorespiration process. Both reactions occur simultaneously and in competition at the same active site. This Synechocystis sp. (strain ATCC 27184 / PCC 6803 / Kazusa) protein is Ribulose bisphosphate carboxylase large chain.